The chain runs to 285 residues: Tryptophan synthase alpha chain (285 aa).

Active-site proton acceptor residues include Glu-53 and Asp-64.

This sequence belongs to the TrpA family. In terms of assembly, tetramer of two alpha and two beta chains.

The enzyme catalyses (1S,2R)-1-C-(indol-3-yl)glycerol 3-phosphate + L-serine = D-glyceraldehyde 3-phosphate + L-tryptophan + H2O. It functions in the pathway amino-acid biosynthesis; L-tryptophan biosynthesis; L-tryptophan from chorismate: step 5/5. Its function is as follows. The alpha subunit is responsible for the aldol cleavage of indoleglycerol phosphate to indole and glyceraldehyde 3-phosphate. The protein is Tryptophan synthase alpha chain of Bordetella parapertussis (strain 12822 / ATCC BAA-587 / NCTC 13253).